Reading from the N-terminus, the 335-residue chain is MPAVLGFEGSANKIGVGVVRDGTVLANPRRTYVTAPGTGFLPGDTARHHRAVILDLLQEALAEAGLTSKDIDCIAFTKGPGMGAPLASVAVVARTVAQLWNKPLLGVNHCIGHIEMGRLITGAVNPTVLYVSGGNTQVISYSEHRYRIFGETIDIAVGNCLDRFARVLKISNDPSPGYNIEQMAKRGKKLVELPYTVKGMDVSFSGILSFIEDAAQRMLATGECTPEDLCFSLQETVFAMLVEITERAMAHCGSKEALIVGGVGCNLRLQEMMGTMCQERGAQLFATDERFCVDNGAMIAQAGWEMFQAGHRTPLKDSAITQRYRTDEVEVTWRD.

A divalent metal cation-binding residues include H109, H113, and Y130. Residues 130–134 (YVSGG), D162, G177, E181, and N266 contribute to the substrate site. D294 provides a ligand contact to a divalent metal cation.

The protein belongs to the KAE1 / TsaD family. In terms of assembly, component of the EKC/KEOPS complex composed of at least GON7, TP53RK, TPRKB, OSGEP and LAGE3; the whole complex dimerizes. A divalent metal cation is required as a cofactor. Widely expressed at low level. Expressed at intermediate level in lung. Weakly expressed in testis, skeletal muscle, kidney, liver, spleen, brain and heart.

The protein resides in the cytoplasm. It localises to the nucleus. It catalyses the reaction L-threonylcarbamoyladenylate + adenosine(37) in tRNA = N(6)-L-threonylcarbamoyladenosine(37) in tRNA + AMP + H(+). Component of the EKC/KEOPS complex that is required for the formation of a threonylcarbamoyl group on adenosine at position 37 (t(6)A37) in tRNAs that read codons beginning with adenine. The complex is probably involved in the transfer of the threonylcarbamoyl moiety of threonylcarbamoyl-AMP (TC-AMP) to the N6 group of A37. OSGEP likely plays a direct catalytic role in this reaction, but requires other protein(s) of the complex to fulfill this activity. The polypeptide is tRNA N6-adenosine threonylcarbamoyltransferase (Osgep) (Mus musculus (Mouse)).